The following is a 792-amino-acid chain: Phenylalanine--tRNA ligase beta subunit (792 aa).

The tRNA-binding domain occupies 39-147 (GESLGQVVVA…DDAPVGQALA (109 aa)). The 76-residue stretch at 400-475 (PQPARILLRR…RIHGYDRVPT (76 aa)) folds into the B5 domain. Mg(2+) is bound by residues D453, D459, E462, and D463. Residues 698–791 (SRFPSVRRDL…IEREHRARIR (94 aa)) form the FDX-ACB domain.

This sequence belongs to the phenylalanyl-tRNA synthetase beta subunit family. Type 1 subfamily. Tetramer of two alpha and two beta subunits. The cofactor is Mg(2+).

The protein localises to the cytoplasm. The enzyme catalyses tRNA(Phe) + L-phenylalanine + ATP = L-phenylalanyl-tRNA(Phe) + AMP + diphosphate + H(+). The chain is Phenylalanine--tRNA ligase beta subunit from Xanthomonas oryzae pv. oryzae (strain KACC10331 / KXO85).